Here is a 204-residue protein sequence, read N- to C-terminus: Holliday junction branch migration complex subunit RuvA (204 aa).

Residues 1 to 64 are domain I; that stretch reads MIARLRGTLL…EDGQTLFGFR (64 aa). A domain II region spans residues 65–143; sequence TRAERDLFRR…GVGGGSTAAP (79 aa). The segment at 144-153 is flexible linker; that stretch reads AAGADHPTGE. Residues 153–204 are domain III; the sequence is ENDPVSEAIEGLVALGYKPPEAARMARNAAEPELGCEAIIRRALQRAVPRGG.

It belongs to the RuvA family. In terms of assembly, homotetramer. Forms an RuvA(8)-RuvB(12)-Holliday junction (HJ) complex. HJ DNA is sandwiched between 2 RuvA tetramers; dsDNA enters through RuvA and exits via RuvB. An RuvB hexamer assembles on each DNA strand where it exits the tetramer. Each RuvB hexamer is contacted by two RuvA subunits (via domain III) on 2 adjacent RuvB subunits; this complex drives branch migration. In the full resolvosome a probable DNA-RuvA(4)-RuvB(12)-RuvC(2) complex forms which resolves the HJ.

The protein resides in the cytoplasm. In terms of biological role, the RuvA-RuvB-RuvC complex processes Holliday junction (HJ) DNA during genetic recombination and DNA repair, while the RuvA-RuvB complex plays an important role in the rescue of blocked DNA replication forks via replication fork reversal (RFR). RuvA specifically binds to HJ cruciform DNA, conferring on it an open structure. The RuvB hexamer acts as an ATP-dependent pump, pulling dsDNA into and through the RuvAB complex. HJ branch migration allows RuvC to scan DNA until it finds its consensus sequence, where it cleaves and resolves the cruciform DNA. The protein is Holliday junction branch migration complex subunit RuvA of Halorhodospira halophila (strain DSM 244 / SL1) (Ectothiorhodospira halophila (strain DSM 244 / SL1)).